Here is a 370-residue protein sequence, read N- to C-terminus: Phosphate-binding protein PstS 3 (370 aa).

The signal sequence occupies residues 1–22 (MKLNRFGAAVGVLAAGALVLSA). Cysteine 23 carries N-palmitoyl cysteine lipidation. Cysteine 23 carries S-diacylglycerol cysteine lipidation. Residues 56–58 (STA), serine 86, aspartate 104, and 191–193 (SGT) each bind phosphate.

This sequence belongs to the PstS family. The complex is composed of two ATP-binding proteins (PstB), two transmembrane proteins (PstC and PstA) and a solute-binding protein (PstS).

Its subcellular location is the cell membrane. Functionally, part of the ABC transporter complex PstSACB involved in phosphate import. This chain is Phosphate-binding protein PstS 3 (pstS3), found in Mycobacterium bovis (strain ATCC BAA-935 / AF2122/97).